Consider the following 356-residue polypeptide: Transcription factor MafB (356 aa).

Disordered stretches follow at residues 49–79 (RLQPQGSVSSTPISTPCSSVPSSPSFSPTEQ) and 140–240 (YRGA…LNVE). A compositionally biased stretch (low complexity) spans 55–77 (SVSSTPISTPCSSVPSSPSFSPT). 2 stretches are compositionally biased toward basic residues: residues 183 to 196 (AHGHHPHHHHHHHH) and 212 to 223 (HHRHHHHHHPHG). Positions 270–295 (RLKQKRRTLKNRGYAQSCRFKRVQQK) are basic motif. In terms of domain architecture, bZIP spans 270–333 (RLKQKRRTLK…DAYKLKCEKL (64 aa)). The tract at residues 298 to 319 (LENEKTQLINQVEQLKQEINRL) is leucine-zipper.

Belongs to the bZIP family. Maf subfamily. In terms of assembly, homodimer or heterodimer with other bHLH-Zip transcription factors. Binds DNA as a homodimer or a heterodimer.

The protein resides in the nucleus. May act as a transcriptional activator or repressor. Involved in neurogenesis. Involved in the development of rhombomeres (r) 5 and 6 segments from their common precursor 'proto-segment' in the hindbrain. The polypeptide is Transcription factor MafB (mafb) (Danio rerio (Zebrafish)).